The following is a 371-amino-acid chain: Protein maelstrom 1 (371 aa).

A DNA-binding region (HMG box) is located at residues 2-68 (AQNKPNAFMA…VLERESKTER (67 aa)).

The protein belongs to the maelstrom family.

It localises to the cytoplasm. The protein resides in the nucleus. Its function is as follows. Involved both in the piRNA and miRNA metabolic processes. As a component of the meiotic nuage, plays a central role during oogenesis by repressing transposable elements and preventing their mobilization, which is essential for the germline integrity. Repression of transposable elements is mediated via the piRNA metabolic process, which mediates the repression of transposable elements during meiosis by forming complexes composed of piRNAs and Piwi proteins and governs the repression of transposons. As a nuclear component, it is required for proper differentiation in the germline stem cell (GSC) lineage by repressing microRNA-7 (miR-7), thereby acting as an indirect regulator of bag-of-marbles (Bam). Acts by binding to the promoter of miR-7 gene and repressing its expression; miR-7 repression alleviates the Bam repression by miR-7, thereby allowing differentiation in the germline stem cell (GSC) lineage. The protein is Protein maelstrom 1 (mael1) of Drosophila pseudoobscura pseudoobscura (Fruit fly).